A 468-amino-acid chain; its full sequence is uncharacterized protein (468 aa).

The N-terminal stretch at 1–19 (MRVLSVLLVALTVAGSAYS) is a signal peptide. 2 N-linked (GlcNAc...) asparagine glycosylation sites follow: asparagine 86 and asparagine 334. Positions 401–421 (NPSTNLPETSPPTEQPTAPPA) are disordered. The segment covering 409–421 (TSPPTEQPTAPPA) has biased composition (pro residues). A glycan (N-linked (GlcNAc...) asparagine) is linked at asparagine 435. Asparagine 444 carries GPI-like-anchor amidated asparagine lipidation. Positions 445 to 468 (SASSIEMSKLVVAILSLFILAFFH) are cleaved as a propeptide — removed in mature form.

The protein resides in the cell membrane. This is an uncharacterized protein from Dictyostelium discoideum (Social amoeba).